A 494-amino-acid chain; its full sequence is Guanosine-5'-triphosphate,3'-diphosphate pyrophosphatase (494 aa).

The protein belongs to the GppA/Ppx family. GppA subfamily.

It carries out the reaction guanosine 3'-diphosphate 5'-triphosphate + H2O = guanosine 3',5'-bis(diphosphate) + phosphate + H(+). It functions in the pathway purine metabolism; ppGpp biosynthesis; ppGpp from GTP: step 2/2. Catalyzes the conversion of pppGpp to ppGpp. Guanosine pentaphosphate (pppGpp) is a cytoplasmic signaling molecule which together with ppGpp controls the 'stringent response', an adaptive process that allows bacteria to respond to amino acid starvation, resulting in the coordinated regulation of numerous cellular activities. The sequence is that of Guanosine-5'-triphosphate,3'-diphosphate pyrophosphatase from Escherichia coli O139:H28 (strain E24377A / ETEC).